A 322-amino-acid polypeptide reads, in one-letter code: D-alanine--D-alanine ligase (322 aa).

Residues 108–311 enclose the ATP-grasp domain; it reads KEFYYNAELP…FPSLLDTLIE (204 aa). 136–192 serves as a coordination point for ATP; it reads IEDLGLPLVVKPACAGSSIGISLAHTEEELLAGINHARDCSAGAIMVEQFIKGRELT. Residues D265, E278, and N280 each contribute to the Mg(2+) site.

Belongs to the D-alanine--D-alanine ligase family. Mg(2+) is required as a cofactor. Requires Mn(2+) as cofactor.

The protein resides in the cytoplasm. It carries out the reaction 2 D-alanine + ATP = D-alanyl-D-alanine + ADP + phosphate + H(+). It functions in the pathway cell wall biogenesis; peptidoglycan biosynthesis. Functionally, cell wall formation. The sequence is that of D-alanine--D-alanine ligase from Desulfotalea psychrophila (strain LSv54 / DSM 12343).